The sequence spans 1052 residues: ATP-dependent DNA helicase MPH1 (1052 aa).

Residues 89–256 (IVRKGLLQNI…EVVNNLNISK (168 aa)) form the Helicase ATP-binding domain. Position 102–109 (102–109 (IPTGMGKT)) interacts with ATP. The short motif at 204 to 207 (DEAH) is the DEAH box element. The region spanning 432 to 649 (ELTQFFYENP…HLVQYRKSDR (218 aa)) is the Helicase C-terminal domain. 4 disordered regions span residues 495–550 (HGPK…NQKQ), 798–832 (IGDT…DLPL), 869–898 (SKRQ…QPEV), and 1002–1052 (HTVS…DSDF). Over residues 503 to 532 (SDREKRLEEERRMDEEKKQAALQEKLERTS) the composition is skewed to basic and acidic residues. The segment covering 534-549 (RTGSSEEAQLSGMNQK) has biased composition (polar residues). Low complexity-rich tracts occupy residues 875-898 (QPEV…QPEV) and 1005-1028 (SQSQ…QQAS). A compositionally biased stretch (basic and acidic residues) spans 1029–1040 (QKDRSSQDKDLT). Residues 1043–1052 (ELEDLLDSDF) show a composition bias toward acidic residues.

The protein belongs to the DEAD box helicase family. DEAH subfamily. FANCM sub-subfamily. Interacts with the MHF histone-fold complex to form the FANCM-MHF complex.

The protein resides in the nucleus. The catalysed reaction is ATP + H2O = ADP + phosphate + H(+). ATP-dependent DNA helicase involved in DNA damage repair by homologous recombination and in genome maintenance. Capable of unwinding D-loops. Plays a role in limiting crossover recombinants during mitotic DNA double-strand break (DSB) repair. Component of a FANCM-MHF complex which promotes gene conversion at blocked replication forks, probably by reversal of the stalled fork. In Candida glabrata (strain ATCC 2001 / BCRC 20586 / JCM 3761 / NBRC 0622 / NRRL Y-65 / CBS 138) (Yeast), this protein is ATP-dependent DNA helicase MPH1.